The following is a 221-amino-acid chain: Vesicle-associated membrane protein 722 (221 aa).

The Cytoplasmic segment spans residues 1–196 (MAQQSLIYSF…MWFQNMKIKL (196 aa)). In terms of domain architecture, Longin spans 10–114 (FVARGTVILV…SLNKEFGSKL (105 aa)). One can recognise a v-SNARE coiled-coil homology domain in the interval 130 to 190 (KLAKVKAQVS…TQMRRKMWFQ (61 aa)). The helical; Anchor for type IV membrane protein transmembrane segment at 197–217 (IVLAIIIALILIIILSICGGF) threads the bilayer. The Vesicular portion of the chain corresponds to 218–221 (NCGK).

It belongs to the synaptobrevin family. In terms of tissue distribution, highly expressed in stems and roots. Detected in flowers and leaves.

The protein resides in the cell membrane. Its subcellular location is the early endosome membrane. Functionally, involved in the targeting and/or fusion of transport vesicles to their target membrane. This is Vesicle-associated membrane protein 722 from Arabidopsis thaliana (Mouse-ear cress).